We begin with the raw amino-acid sequence, 346 residues long: MTSLCLTIAPAVLSLICLSSYGWAEDNNGIHTLDDGDNDPFFRHNRQFYRFGRAFVPLWDNADDSLVRKNLLTHWSEFPLSPALSSSDVFSRNSRQFYRFGRSYPPYQDKRFLRFGRSHQPDIDEYLQALNSDQALYRKRRSEDGDSKEDGLNRVARSADANQQSKNTQSNKFGKDLQKRETKKEKLNANDDLEILSNEDDLEKKFMRFGKRFMRFGRGDEDESYDKRFMRFGKSLRHDQEFEKRFMRFGKRFMRFGRGDEDDAREEKRFLRFGKSSNEDEDIKKRFMRFGKSGNEDGDVDKRFMRFGKRFMRFGKSEKEDGDVDKRFMRFGKRFMRFGRGDSETS.

The N-terminal stretch at 1–19 (MTSLCLTIAPAVLSLICLS) is a signal peptide. Positions 20 to 45 (SYGWAEDNNGIHTLDDGDNDPFFRHN) are excised as a propeptide. The residue at position 51 (Phe51) is a Phenylalanine amide. Positions 54–94 (AFVPLWDNADDSLVRKNLLTHWSEFPLSPALSSSDVFSRNS) are excised as a propeptide. Residue Phe100 is modified to Phenylalanine amide. Residues 103–109 (SYPPYQD) constitute a propeptide that is removed on maturation. Phe115 carries the phenylalanine amide modification. Positions 118-203 (SHQPDIDEYL…EILSNEDDLE (86 aa)) are excised as a propeptide. The segment at 137 to 185 (YRKRRSEDGDSKEDGLNRVARSADANQQSKNTQSNKFGKDLQKRETKKE) is disordered. The span at 141 to 152 (RSEDGDSKEDGL) shows a compositional bias: basic and acidic residues. Polar residues predominate over residues 160-172 (DANQQSKNTQSNK). The span at 173–185 (FGKDLQKRETKKE) shows a compositional bias: basic and acidic residues. 2 positions are modified to phenylalanine amide: Phe209 and Phe216. Residues 219–226 (GDEDESYD) constitute a propeptide that is removed on maturation. A Phenylalanine amide modification is found at Phe232. Residues 235–243 (SLRHDQEFE) constitute a propeptide that is removed on maturation. Residues Phe249 and Phe256 each carry the phenylalanine amide modification. Residues 259–267 (GDEDDAREE) constitute a propeptide that is removed on maturation. A Phenylalanine amide modification is found at Phe273. The propeptide occupies 276-283 (SSNEDEDI). Phe290 is subject to Phenylalanine amide. Positions 293-301 (SGNEDGDVD) are excised as a propeptide. Phe307 and Phe314 each carry phenylalanine amide. Residues 317–325 (SEKEDGDVD) constitute a propeptide that is removed on maturation. Phenylalanine amide occurs at positions 331 and 338. Positions 341 to 346 (GDSETS) are excised as a propeptide.

The protein belongs to the FARP (FMRFamide related peptide) family. As to expression, central nervous system.

It is found in the secreted. Its function is as follows. Can function as both cardioregulatory hormones and transmitters and may regulate cardiovascular function. This is FMRFamide-related peptides type HF-1 from Cornu aspersum (Brown garden snail).